The following is a 313-amino-acid chain: MNTFSQVWVFSDTPSRLPELMNGAQALANQINTFVLNDADGAQAIQLGANHVWKLSGKPDERMIEDYAGVMADTIRQHGADGLVLLPNTRRGKLLAAKLGYRLKAAVSNDASTVSVQDGKATVKHMVYGGLAIGEERIATPYAVLTISSGTFDAAQPDASRTGETHTVEWLAPAVAITRTATQARQSNSVDLDKARLVVSVGRGIGSKENIALAEQLCKAIGAELACSRPVAENEKWMEHERYVGISNLMLKPELYLAVGISGQIQHMVGANASQTIFAINKDKNAPIFQYADYGIVGDAVKILPALTAALAR.

Position 255–283 (255–283) interacts with FAD; the sequence is LYLAVGISGQIQHMVGANASQTIFAINKD.

This sequence belongs to the ETF alpha-subunit/FixB family. Heterodimer of FixA and FixB.

Its pathway is amine and polyamine metabolism; carnitine metabolism. In terms of biological role, required for anaerobic carnitine reduction. May bring reductant to CaiA. This chain is Protein FixB, found in Escherichia coli O7:K1 (strain IAI39 / ExPEC).